Reading from the N-terminus, the 182-residue chain is Putative minor fimbrial subunit PmfF (182 aa).

An N-terminal signal peptide occupies residues Met1 to Ala22.

This sequence belongs to the fimbrial protein family.

It localises to the fimbrium. This is Putative minor fimbrial subunit PmfF (pmfF) from Proteus mirabilis (strain HI4320).